Reading from the N-terminus, the 117-residue chain is Prefoldin subunit beta (117 aa).

It belongs to the prefoldin subunit beta family. Heterohexamer of two alpha and four beta subunits.

Its subcellular location is the cytoplasm. Functionally, molecular chaperone capable of stabilizing a range of proteins. Seems to fulfill an ATP-independent, HSP70-like function in archaeal de novo protein folding. This Pyrococcus furiosus (strain ATCC 43587 / DSM 3638 / JCM 8422 / Vc1) protein is Prefoldin subunit beta.